A 298-amino-acid polypeptide reads, in one-letter code: Putative insertion sequence ATP-binding protein y4iQ/y4nD/y4sD (298 aa).

ATP is bound at residue 114–121; the sequence is GPPGGGKS. Residues 276–298 form a disordered region; sequence RQSEHDETLASDNQHDTFMPTAT.

Belongs to the IS21/IS1162 putative ATP-binding protein family.

The protein is Putative insertion sequence ATP-binding protein y4iQ/y4nD/y4sD of Sinorhizobium fredii (strain NBRC 101917 / NGR234).